The chain runs to 387 residues: 3-ketoacyl-CoA thiolase (387 aa).

Cysteine 91 functions as the Acyl-thioester intermediate in the catalytic mechanism. Residues histidine 343 and cysteine 373 each act as proton acceptor in the active site.

The protein belongs to the thiolase-like superfamily. Thiolase family. As to quaternary structure, heterotetramer of two alpha chains (FadB) and two beta chains (FadA).

Its subcellular location is the cytoplasm. It carries out the reaction an acyl-CoA + acetyl-CoA = a 3-oxoacyl-CoA + CoA. The protein operates within lipid metabolism; fatty acid beta-oxidation. Its function is as follows. Catalyzes the final step of fatty acid oxidation in which acetyl-CoA is released and the CoA ester of a fatty acid two carbons shorter is formed. This chain is 3-ketoacyl-CoA thiolase, found in Enterobacter sp. (strain 638).